A 947-amino-acid chain; its full sequence is Translation initiation factor IF-2 (947 aa).

Residues 47–332 (LRESFGGGKS…RGRKSKRAKR (286 aa)) form a disordered region. Positions 86-95 (APDRSLDAAL) are enriched in basic and acidic residues. Over residues 105–123 (APVPAPAPAPTPAPAPAPA) the composition is skewed to pro residues. Residues 131–145 (APPAATPAAPAASAA) show a composition bias toward low complexity. Composition is skewed to pro residues over residues 146–171 (PAPP…PQAP) and 210–225 (PRPQ…PGAP). Gly residues predominate over residues 255–318 (RPGGGRPGGP…GAAGAFGRPG (64 aa)). Positions 322 to 331 (RRGRKSKRAK) are enriched in basic residues. In terms of domain architecture, tr-type G spans 443–614 (TRPPVVTVMG…AVLLTADAAL (172 aa)). The G1 stretch occupies residues 452–459 (GHVDHGKT). A GTP-binding site is contributed by 452-459 (GHVDHGKT). The tract at residues 477–481 (GITQH) is G2. A G3 region spans residues 502 to 505 (DTPG). GTP-binding positions include 502–506 (DTPGH) and 556–559 (NKID). The tract at residues 556–559 (NKID) is G4. A G5 region spans residues 592–594 (SAK).

Belongs to the TRAFAC class translation factor GTPase superfamily. Classic translation factor GTPase family. IF-2 subfamily.

The protein resides in the cytoplasm. Its function is as follows. One of the essential components for the initiation of protein synthesis. Protects formylmethionyl-tRNA from spontaneous hydrolysis and promotes its binding to the 30S ribosomal subunits. Also involved in the hydrolysis of GTP during the formation of the 70S ribosomal complex. In Mycobacterium marinum (strain ATCC BAA-535 / M), this protein is Translation initiation factor IF-2.